Here is a 393-residue protein sequence, read N- to C-terminus: MTRTSPTLPVIILGAGMVGLTLAQALKKAGIPYEVYERDSAADTEKGRGWALTVHWALNALEECLPAELFNRLEEIQVDPTLDDSRRFCFLDLSTAIPKYVIPPSKRLRVNRRLLGNLLGEGLDINYNKTLSSFHVSPETPDSVTVTFTDGTSTTGCLLVGTDGRNSKTRRLLLGEEAGALNPLPVRSIGTTITMTPEQFAPIREIDPLLFQGSHPETGVYMWFSLVSSPTINGSKDTPNPFYEGQLIQSWLYKSEKDAVPETDADRLALFKNNAQHFQRRLREAIETLPEDSKVLHIKLVDWVPVDWDNRGGRVTLAGDAAHAMTSYRGEAFNHGVADAAMLSRNIIAAWTNPGMTGGIADAPDSPIVSKRAKIAREARDARARAKLSEIAV.

Residues 1–23 form the signal peptide; the sequence is MTRTSPTLPVIILGAGMVGLTLA. Glutamate 37 and arginine 107 together coordinate FAD. Asparagine 128 is a glycosylation site (N-linked (GlcNAc...) asparagine). The active site involves tyrosine 221. Asparagine 233 carries N-linked (GlcNAc...) asparagine glycosylation. Aspartate 320 contacts FAD.

Belongs to the paxM FAD-dependent monooxygenase family. FAD is required as a cofactor.

The protein operates within secondary metabolite biosynthesis. Its function is as follows. FAD-dependent monooxygenase; part of the gene cluster that mediates the biosynthesis of the antibiotic 2,4-dihydroxy-3-methyl-6-(2-oxopropyl)benzaldehyde (DHMBA) and its derivatives. The direct non-reducing polyketide synthase dbaI product is 2,4-dihydroxy-3-methyl-6-(2-oxopropyl)benzaldehyde (DHMBA), produced by condensation of one acetyl-CoA starter unit with 4 malonyl-CoA units and one methylation step. The FAD-dependent monooxygenase dbaH is responsible for the synthesis of yellow pigments derived from the oxidation of DHMBA. The roles of dbaB, C, E and F have still to be determined. The chain is FAD-dependent monooxygenase dbaB from Emericella nidulans (strain FGSC A4 / ATCC 38163 / CBS 112.46 / NRRL 194 / M139) (Aspergillus nidulans).